Consider the following 425-residue polypeptide: Histidine--tRNA ligase (425 aa).

The protein belongs to the class-II aminoacyl-tRNA synthetase family. Homodimer.

It is found in the cytoplasm. It carries out the reaction tRNA(His) + L-histidine + ATP = L-histidyl-tRNA(His) + AMP + diphosphate + H(+). In Aeromonas salmonicida (strain A449), this protein is Histidine--tRNA ligase.